Consider the following 219-residue polypeptide: Lipoprotein-releasing system ATP-binding protein LolD (219 aa).

An ABC transporter domain is found at 3 to 219 (IEARNIRKSF…HMRDGLLFSE (217 aa)). Position 35–42 (35–42 (GTSGAGKT)) interacts with ATP.

The protein belongs to the ABC transporter superfamily. Lipoprotein translocase (TC 3.A.1.125) family. In terms of assembly, the complex is composed of two ATP-binding proteins (LolD) and two transmembrane proteins (LolC and LolE).

It is found in the cell inner membrane. Functionally, part of the ABC transporter complex LolCDE involved in the translocation of mature outer membrane-directed lipoproteins, from the inner membrane to the periplasmic chaperone, LolA. Responsible for the formation of the LolA-lipoprotein complex in an ATP-dependent manner. The protein is Lipoprotein-releasing system ATP-binding protein LolD of Porphyromonas gingivalis (strain ATCC BAA-308 / W83).